The following is a 238-amino-acid chain: Uridylate kinase (238 aa).

12 to 15 contacts ATP; sequence KLSG. Residues 20–25 form an involved in allosteric activation by GTP region; it reads GQQGFG. Residue G54 participates in UMP binding. Residues G55 and R59 each coordinate ATP. UMP contacts are provided by residues D74 and 135 to 142; that span reads TGNPFFTT. Residues T162, N163, Y168, and D171 each contribute to the ATP site.

Belongs to the UMP kinase family. In terms of assembly, homohexamer.

Its subcellular location is the cytoplasm. It carries out the reaction UMP + ATP = UDP + ADP. Its pathway is pyrimidine metabolism; CTP biosynthesis via de novo pathway; UDP from UMP (UMPK route): step 1/1. With respect to regulation, allosterically activated by GTP. Inhibited by UTP. Functionally, catalyzes the reversible phosphorylation of UMP to UDP. In Bradyrhizobium diazoefficiens (strain JCM 10833 / BCRC 13528 / IAM 13628 / NBRC 14792 / USDA 110), this protein is Uridylate kinase.